A 224-amino-acid polypeptide reads, in one-letter code: ATP phosphoribosyltransferase (224 aa).

It belongs to the ATP phosphoribosyltransferase family. Short subfamily. As to quaternary structure, heteromultimer composed of HisG and HisZ subunits.

It is found in the cytoplasm. The catalysed reaction is 1-(5-phospho-beta-D-ribosyl)-ATP + diphosphate = 5-phospho-alpha-D-ribose 1-diphosphate + ATP. It participates in amino-acid biosynthesis; L-histidine biosynthesis; L-histidine from 5-phospho-alpha-D-ribose 1-diphosphate: step 1/9. In terms of biological role, catalyzes the condensation of ATP and 5-phosphoribose 1-diphosphate to form N'-(5'-phosphoribosyl)-ATP (PR-ATP). Has a crucial role in the pathway because the rate of histidine biosynthesis seems to be controlled primarily by regulation of HisG enzymatic activity. The polypeptide is ATP phosphoribosyltransferase (Cupriavidus taiwanensis (strain DSM 17343 / BCRC 17206 / CCUG 44338 / CIP 107171 / LMG 19424 / R1) (Ralstonia taiwanensis (strain LMG 19424))).